The following is a 471-amino-acid chain: GDP-mannose transporter (471 aa).

Polar residues predominate over residues 1–13; sequence MSSGSRSFFTPQE. The interval 1 to 52 is disordered; the sequence is MSSGSRSFFTPQETRLELPQGAAHQTPDITRPASPSENDRAPFLNGGPSDAR. The Cytoplasmic segment spans residues 1–70; that stretch reads MSSGSRSFFT…ALRNDSEKPA (70 aa). The helical transmembrane segment at 71–91 threads the bilayer; that stretch reads VGIMALAPILCYCAASITMTV. The Lumenal segment spans residues 92–101; it reads VNKFTVSGRG. A helical membrane pass occupies residues 102 to 122; it reads FNMNLLVLLIQSTVGVTCVWI. At 123–139 the chain is on the cytoplasmic side; it reads AERAGLIQLRGLNAKDA. The helical transmembrane segment at 140–160 threads the bilayer; it reads WNWMPLSIMLVFVIWTGSKAL. Topologically, residues 161-166 are lumenal; it reads QYLNIS. Residue N164 is glycosylated (N-linked (GlcNAc...) asparagine). A helical transmembrane segment spans residues 167-187; the sequence is VYTIFKNLTIILIAYGEVMWF. Residues 188–193 lie on the Cytoplasmic side of the membrane; it reads GGRVTR. Residues 194–214 form a helical membrane-spanning segment; it reads IVLCSFLFMVLSSVIAAWSDI. Over 215–279 the chain is Lumenal; that stretch reads SNVFAIGNLS…DVIEGFQGYG (65 aa). N-linked (GlcNAc...) asparagine glycosylation occurs at N222. A helical membrane pass occupies residues 280–300; it reads LLSSGYVWMALNCICSATYVL. At 301 to 315 the chain is on the cytoplasmic side; sequence LMRKRIKVTGFKDWD. Residues 316 to 336 traverse the membrane as a helical segment; that stretch reads TMFYNNFLSIPVLLLMSFLVE. Residues 337-354 lie on the Lumenal side of the membrane; that stretch reads DWSYANLHKNFPDDKQTK. A helical transmembrane segment spans residues 355–375; the sequence is LISAIVFSGACAILISYTTAW. Residues 376–383 are Cytoplasmic-facing; that stretch reads CIRATSST. Residues 384 to 404 traverse the membrane as a helical segment; it reads TYSMVGALNKLPVALSGMVFF. Residues 405-408 lie on the Lumenal side of the membrane; it reads HDPP. A helical transmembrane segment spans residues 409–429; the sequence is VTFSSVSAIAVGFFAGLVYAF. Topologically, residues 430-471 are cytoplasmic; it reads GKNKQAEAAKLGGHASANGSSSMSGSKDGSSLPMHTFNDRKD. Positions 442–460 are enriched in low complexity; that stretch reads GHASANGSSSMSGSKDGSS. The interval 442–471 is disordered; it reads GHASANGSSSMSGSKDGSSLPMHTFNDRKD.

Belongs to the TPT transporter family. SLC35D subfamily. As to quaternary structure, homooligomer.

The protein resides in the golgi apparatus membrane. The protein localises to the cytoplasmic vesicle membrane. It localises to the endoplasmic reticulum membrane. Its function is as follows. Involved in the import of GDP-mannose from the cytoplasm into the Golgi lumen. The chain is GDP-mannose transporter (VRG4) from Mycosarcoma maydis (Corn smut fungus).